Consider the following 38-residue polypeptide: Large ribosomal subunit protein bL36 (38 aa).

This sequence belongs to the bacterial ribosomal protein bL36 family.

The polypeptide is Large ribosomal subunit protein bL36 (Proteus mirabilis (strain HI4320)).